Reading from the N-terminus, the 132-residue chain is Large ribosomal subunit protein bL12 (132 aa).

It belongs to the bacterial ribosomal protein bL12 family. As to quaternary structure, homodimer. Part of the ribosomal stalk of the 50S ribosomal subunit. Forms a multimeric L10(L12)X complex, where L10 forms an elongated spine to which 2 to 4 L12 dimers bind in a sequential fashion. Binds GTP-bound translation factors.

Forms part of the ribosomal stalk which helps the ribosome interact with GTP-bound translation factors. Is thus essential for accurate translation. The polypeptide is Large ribosomal subunit protein bL12 (Prochlorococcus marinus (strain MIT 9211)).